The chain runs to 178 residues: Large ribosomal subunit protein uL6 (178 aa).

This sequence belongs to the universal ribosomal protein uL6 family. In terms of assembly, part of the 50S ribosomal subunit.

In terms of biological role, this protein binds to the 23S rRNA, and is important in its secondary structure. It is located near the subunit interface in the base of the L7/L12 stalk, and near the tRNA binding site of the peptidyltransferase center. This is Large ribosomal subunit protein uL6 from Francisella tularensis subsp. tularensis (strain FSC 198).